A 351-amino-acid polypeptide reads, in one-letter code: Inositol monophosphatase 3 (351 aa).

Residues 11 to 31 (LGIGVFCLLALGVLYHVYSGF) traverse the membrane as a helical segment. Mg(2+)-binding residues include Glu121, Asp162, Leu164, Asp165, and Asp288. Residue Glu121 participates in substrate binding. Substrate is bound by residues 164 to 167 (LDAT) and Asp288.

It belongs to the inositol monophosphatase superfamily. Mg(2+) is required as a cofactor.

The protein localises to the membrane. The enzyme catalyses a myo-inositol phosphate + H2O = myo-inositol + phosphate. Its pathway is polyol metabolism; myo-inositol biosynthesis; myo-inositol from D-glucose 6-phosphate: step 2/2. This chain is Inositol monophosphatase 3 (bpnt2), found in Xenopus laevis (African clawed frog).